The chain runs to 226 residues: Ribonuclease 3 (226 aa).

Residues 7 to 134 (KQNLKKKYGI…FNGALFLDQG (128 aa)) enclose the RNase III domain. A Mg(2+)-binding site is contributed by glutamate 47. Aspartate 51 is a catalytic residue. Mg(2+) is bound by residues aspartate 120 and glutamate 123. Residue glutamate 123 is part of the active site. In terms of domain architecture, DRBM spans 160 to 226 (DYKTELQERL…AAQAALDKNK (67 aa)). The tract at residues 201-226 (KVSEGQGRNKKAAEQQAAQAALDKNK) is disordered. The segment covering 214 to 226 (EQQAAQAALDKNK) has biased composition (low complexity).

The protein belongs to the ribonuclease III family. In terms of assembly, homodimer. It depends on Mg(2+) as a cofactor.

The protein localises to the cytoplasm. The enzyme catalyses Endonucleolytic cleavage to 5'-phosphomonoester.. Digests double-stranded RNA. Involved in the processing of primary rRNA transcript to yield the immediate precursors to the large and small rRNAs (23S and 16S). Processes some mRNAs, and tRNAs when they are encoded in the rRNA operon. Processes pre-crRNA and tracrRNA of type II CRISPR loci if present in the organism. In Lactobacillus johnsonii (strain CNCM I-12250 / La1 / NCC 533), this protein is Ribonuclease 3.